The sequence spans 143 residues: 3-hydroxyacyl-[acyl-carrier-protein] dehydratase FabZ (143 aa).

H48 is a catalytic residue.

This sequence belongs to the thioester dehydratase family. FabZ subfamily.

The protein resides in the cytoplasm. It catalyses the reaction a (3R)-hydroxyacyl-[ACP] = a (2E)-enoyl-[ACP] + H2O. Involved in unsaturated fatty acids biosynthesis. Catalyzes the dehydration of short chain beta-hydroxyacyl-ACPs and long chain saturated and unsaturated beta-hydroxyacyl-ACPs. This Roseiflexus castenholzii (strain DSM 13941 / HLO8) protein is 3-hydroxyacyl-[acyl-carrier-protein] dehydratase FabZ.